The following is a 196-amino-acid chain: Adenylyl-sulfate kinase (196 aa).

31–38 (GLSGAGKS) provides a ligand contact to ATP. The Phosphoserine intermediate role is filled by S105.

The protein belongs to the APS kinase family.

It carries out the reaction adenosine 5'-phosphosulfate + ATP = 3'-phosphoadenylyl sulfate + ADP + H(+). The protein operates within sulfur metabolism; hydrogen sulfide biosynthesis; sulfite from sulfate: step 2/3. Catalyzes the synthesis of activated sulfate. This is Adenylyl-sulfate kinase (cysC) from Pseudomonas aeruginosa (strain ATCC 15692 / DSM 22644 / CIP 104116 / JCM 14847 / LMG 12228 / 1C / PRS 101 / PAO1).